A 122-amino-acid chain; its full sequence is Large ribosomal subunit protein uL14 (122 aa).

The protein belongs to the universal ribosomal protein uL14 family. In terms of assembly, part of the 50S ribosomal subunit. Forms a cluster with proteins L3 and L19. In the 70S ribosome, L14 and L19 interact and together make contacts with the 16S rRNA in bridges B5 and B8.

In terms of biological role, binds to 23S rRNA. Forms part of two intersubunit bridges in the 70S ribosome. The chain is Large ribosomal subunit protein uL14 from Leuconostoc mesenteroides subsp. mesenteroides (strain ATCC 8293 / DSM 20343 / BCRC 11652 / CCM 1803 / JCM 6124 / NCDO 523 / NBRC 100496 / NCIMB 8023 / NCTC 12954 / NRRL B-1118 / 37Y).